The primary structure comprises 128 residues: Large ribosomal subunit protein bL12 (128 aa).

Belongs to the bacterial ribosomal protein bL12 family. As to quaternary structure, homodimer. Part of the ribosomal stalk of the 50S ribosomal subunit. Forms a multimeric L10(L12)X complex, where L10 forms an elongated spine to which 2 to 4 L12 dimers bind in a sequential fashion. Binds GTP-bound translation factors.

Functionally, forms part of the ribosomal stalk which helps the ribosome interact with GTP-bound translation factors. Is thus essential for accurate translation. The protein is Large ribosomal subunit protein bL12 of Streptomyces antibioticus.